The sequence spans 680 residues: Collagen alpha-1(X) chain (680 aa).

The signal sequence occupies residues 1–18; sequence MLPQIPFLLLMFLTLVHG. Residues 19-56 form a nonhelical region (NC2) region; that stretch reads MFYAERYQTPTGIKGPLASPKTQYFIPYAIKSKGIPVR. The interval 54–531 is disordered; it reads PVRGEQGIPG…PDGFIKAGQR (478 aa). Positions 57–519 are triple-helical region; sequence GEQGIPGPPG…PGPPGPPGQA (463 aa). Pro residues-rich tracts occupy residues 137-147 and 207-216; these read PRGPPGPPGIP and PQGPIGPPGP. Low complexity-rich tracts occupy residues 303 to 321, 373 to 382, and 391 to 409; these read LPGL…APGA, PGARGARGPP, and PGEP…PGQK. Residues 410-419 are compositionally biased toward gly residues; the sequence is GDPGVGGTPG. Composition is skewed to low complexity over residues 423 to 433 and 442 to 453; these read PVGPVGAKGVP and RGEPGIPGTRGP. Residues 506–516 show a composition bias toward pro residues; that stretch reads LPGPPGPPGPP. A nonhelical region (NC1) region spans residues 520–680; the sequence is VMPDGFIKAG…SFSGFLVAPM (161 aa). In terms of domain architecture, C1q spans 547 to 680; the sequence is TGMPVSAFTV…SFSGFLVAPM (134 aa). Ca(2+) contacts are provided by Asp-626, Glu-627, Leu-633, and Asp-634.

As to quaternary structure, homotrimer. Prolines at the third position of the tripeptide repeating unit (G-X-Y) are hydroxylated in some or all of the chains.

Its subcellular location is the secreted. It localises to the extracellular space. It is found in the extracellular matrix. Type X collagen is a product of hypertrophic chondrocytes and has been localized to presumptive mineralization zones of hyaline cartilage. The protein is Collagen alpha-1(X) chain (Col10a1) of Mus musculus (Mouse).